An 833-amino-acid chain; its full sequence is Leucine--tRNA ligase (833 aa).

Residues 41–52 (PYPSGAGLHVGH) carry the 'HIGH' region motif. Positions 610–614 (KMSKS) match the 'KMSKS' region motif. Lys-613 contacts ATP.

This sequence belongs to the class-I aminoacyl-tRNA synthetase family.

It localises to the cytoplasm. It carries out the reaction tRNA(Leu) + L-leucine + ATP = L-leucyl-tRNA(Leu) + AMP + diphosphate. The polypeptide is Leucine--tRNA ligase (Streptococcus suis (strain 98HAH33)).